The sequence spans 388 residues: Na(+)/H(+) antiporter NhaA (388 aa).

The next 11 helical transmembrane spans lie at 8–28 (FFSAASGGAIILLLSALLGLL), 57–77 (LAEFISIAPMSLFFFVVIAEI), 93–113 (ILPLISALGGMMIPACLYGLI), 123–143 (GWAIPIATDAAFTLPIILALG), 152–172 (VWLMALAIFDDLLGIVVIALF), 175–195 (SHLNGYALFAAGLITAVMIGL), 210–230 (GVVLWWALLVSGLHPTIAGVI), 254–274 (IIAPWVTWLILPLFGFVSMGM), 278–298 (AMSFHVLLAPVPLGVALGLFL), 328–348 (LFGLSLLCGIGFTISLFIAEL), and 361–381 (YGILMGSLLSALAGWLWLRFL).

The protein belongs to the NhaA Na(+)/H(+) (TC 2.A.33) antiporter family.

The protein localises to the cell inner membrane. It catalyses the reaction Na(+)(in) + 2 H(+)(out) = Na(+)(out) + 2 H(+)(in). Its function is as follows. Na(+)/H(+) antiporter that extrudes sodium in exchange for external protons. This Zymomonas mobilis subsp. mobilis (strain ATCC 31821 / ZM4 / CP4) protein is Na(+)/H(+) antiporter NhaA.